A 394-amino-acid polypeptide reads, in one-letter code: Elongation factor Tu (394 aa).

The 195-residue stretch at Lys10 to Glu204 folds into the tr-type G domain. The interval Gly19–Thr26 is G1. Gly19–Thr26 is a binding site for GTP. Thr26 provides a ligand contact to Mg(2+). Positions Gly60–Asn64 are G2. The segment at Asp81–Gly84 is G3. GTP contacts are provided by residues Asp81–His85 and Asn136–Asp139. Residues Asn136–Asp139 are G4. The segment at Ser174–Leu176 is G5.

It belongs to the TRAFAC class translation factor GTPase superfamily. Classic translation factor GTPase family. EF-Tu/EF-1A subfamily. Monomer.

The protein localises to the cytoplasm. The catalysed reaction is GTP + H2O = GDP + phosphate + H(+). Its function is as follows. GTP hydrolase that promotes the GTP-dependent binding of aminoacyl-tRNA to the A-site of ribosomes during protein biosynthesis. The chain is Elongation factor Tu from Chlamydia pneumoniae (Chlamydophila pneumoniae).